Consider the following 259-residue polypeptide: Protein unc-50 homolog (259 aa).

Met-1 is modified (N-acetylmethionine). Over residues 1–17 (MLPSTSVNSPAQGNGVL) the composition is skewed to polar residues. Residues 1-22 (MLPSTSVNSPAQGNGVLSSRDA) form a disordered region. The Cytoplasmic portion of the chain corresponds to 1–82 (MLPSTSVNSP…TKDQWARDDP (82 aa)). Ser-6 is subject to Phosphoserine. Residues 83 to 103 (AFLVLLSIWLCVSTIGFGFVL) traverse the membrane as a helical segment. Residues 104 to 115 (DMGFFETIKLLL) are Lumenal-facing. The chain crosses the membrane as a helical span at residues 116 to 136 (WVVFIDCVGVGLLISTLMWFI). The Cytoplasmic segment spans residues 137-163 (SNKYLVKRQSRDYDVEWGYAFDVHLNA). Residues 164-184 (FYPLLVILHFIQLFFINHVIL) traverse the membrane as a helical segment. At 185–187 (TDT) the chain is on the lumenal side. The helical transmembrane segment at 188 to 208 (FIGYLVGNTLWLVAVGYYIYV) threads the bilayer. The Cytoplasmic portion of the chain corresponds to 209-222 (TFLGYSALPFLKNT). A helical transmembrane segment spans residues 223–243 (VILLYPFAPLILLYGLSLALG). Over 244-259 (WNFTHTLCSFYKYRVK) the chain is Lumenal.

It belongs to the unc-50 family.

It is found in the nucleus inner membrane. The protein resides in the golgi apparatus membrane. Functionally, involved in the cell surface expression of neuronal nicotinic receptors. Binds RNA. The polypeptide is Protein unc-50 homolog (UNC50) (Bos taurus (Bovine)).